Consider the following 302-residue polypeptide: Methionyl-tRNA formyltransferase (302 aa).

Serine 109–proline 112 provides a ligand contact to (6S)-5,6,7,8-tetrahydrofolate.

This sequence belongs to the Fmt family.

It carries out the reaction L-methionyl-tRNA(fMet) + (6R)-10-formyltetrahydrofolate = N-formyl-L-methionyl-tRNA(fMet) + (6S)-5,6,7,8-tetrahydrofolate + H(+). Attaches a formyl group to the free amino group of methionyl-tRNA(fMet). The formyl group appears to play a dual role in the initiator identity of N-formylmethionyl-tRNA by promoting its recognition by IF2 and preventing the misappropriation of this tRNA by the elongation apparatus. This chain is Methionyl-tRNA formyltransferase, found in Campylobacter hominis (strain ATCC BAA-381 / DSM 21671 / CCUG 45161 / LMG 19568 / NCTC 13146 / CH001A).